Here is a 779-residue protein sequence, read N- to C-terminus: Polyribonucleotide nucleotidyltransferase (779 aa).

Residues aspartate 490 and aspartate 496 each contribute to the Mg(2+) site. In terms of domain architecture, KH spans 557–618; sequence PHILSLKINP…EAVKARIEAV (62 aa). One can recognise an S1 motif domain in the interval 625-693; sequence GEEFEGTVVK…DRGKIDLIRP (69 aa). Residues 699–752 show a composition bias toward basic and acidic residues; sequence VPLREPRAPRGGDRGPRRDSDRGGDRGPRREFSDRGPRPEGARSERPEGQRTER. Positions 699 to 779 are disordered; sequence VPLREPRAPR…AAPVFPRRED (81 aa). Residues 757–767 show a composition bias toward polar residues; it reads PATQESSQSSD.

The protein belongs to the polyribonucleotide nucleotidyltransferase family. Mg(2+) serves as cofactor.

It is found in the cytoplasm. The enzyme catalyses RNA(n+1) + phosphate = RNA(n) + a ribonucleoside 5'-diphosphate. Functionally, involved in mRNA degradation. Catalyzes the phosphorolysis of single-stranded polyribonucleotides processively in the 3'- to 5'-direction. In Deinococcus radiodurans (strain ATCC 13939 / DSM 20539 / JCM 16871 / CCUG 27074 / LMG 4051 / NBRC 15346 / NCIMB 9279 / VKM B-1422 / R1), this protein is Polyribonucleotide nucleotidyltransferase.